We begin with the raw amino-acid sequence, 248 residues long: tRNA (guanine-N(1)-)-methyltransferase (248 aa).

S-adenosyl-L-methionine is bound by residues glycine 113 and 133 to 138 (IGDYVL). Residues 226 to 248 (ARPAQTIRAKGESQKTPKNKTDG) are disordered. Residues 234-248 (AKGESQKTPKNKTDG) show a composition bias toward basic and acidic residues.

This sequence belongs to the RNA methyltransferase TrmD family. Homodimer.

Its subcellular location is the cytoplasm. It carries out the reaction guanosine(37) in tRNA + S-adenosyl-L-methionine = N(1)-methylguanosine(37) in tRNA + S-adenosyl-L-homocysteine + H(+). In terms of biological role, specifically methylates guanosine-37 in various tRNAs. In Rhodopseudomonas palustris (strain ATCC BAA-98 / CGA009), this protein is tRNA (guanine-N(1)-)-methyltransferase.